A 488-amino-acid chain; its full sequence is Bifunctional protein GlmU (488 aa).

The pyrophosphorylase stretch occupies residues M1–R237. UDP-N-acetyl-alpha-D-glucosamine contacts are provided by residues L13–G16, K27, Q82, G87–T88, S110–D112, G149, E164, N179, and N235. Mg(2+) is bound at residue D112. N235 contributes to the Mg(2+) binding site. Residues V238 to A258 are linker. The segment at G259 to S488 is N-acetyltransferase. UDP-N-acetyl-alpha-D-glucosamine-binding residues include R341 and K359. The Proton acceptor role is filled by H371. Y374 and N385 together coordinate UDP-N-acetyl-alpha-D-glucosamine. Acetyl-CoA is bound by residues A388, N394–Y395, S413, A431, and R448. Residues A459 to S488 form a disordered region. Residues R478 to S488 show a composition bias toward basic residues.

The protein in the N-terminal section; belongs to the N-acetylglucosamine-1-phosphate uridyltransferase family. In the C-terminal section; belongs to the transferase hexapeptide repeat family. Homotrimer. It depends on Mg(2+) as a cofactor.

The protein resides in the cytoplasm. It catalyses the reaction alpha-D-glucosamine 1-phosphate + acetyl-CoA = N-acetyl-alpha-D-glucosamine 1-phosphate + CoA + H(+). The catalysed reaction is N-acetyl-alpha-D-glucosamine 1-phosphate + UTP + H(+) = UDP-N-acetyl-alpha-D-glucosamine + diphosphate. Its pathway is nucleotide-sugar biosynthesis; UDP-N-acetyl-alpha-D-glucosamine biosynthesis; N-acetyl-alpha-D-glucosamine 1-phosphate from alpha-D-glucosamine 6-phosphate (route II): step 2/2. It participates in nucleotide-sugar biosynthesis; UDP-N-acetyl-alpha-D-glucosamine biosynthesis; UDP-N-acetyl-alpha-D-glucosamine from N-acetyl-alpha-D-glucosamine 1-phosphate: step 1/1. The protein operates within bacterial outer membrane biogenesis; LPS lipid A biosynthesis. Catalyzes the last two sequential reactions in the de novo biosynthetic pathway for UDP-N-acetylglucosamine (UDP-GlcNAc). The C-terminal domain catalyzes the transfer of acetyl group from acetyl coenzyme A to glucosamine-1-phosphate (GlcN-1-P) to produce N-acetylglucosamine-1-phosphate (GlcNAc-1-P), which is converted into UDP-GlcNAc by the transfer of uridine 5-monophosphate (from uridine 5-triphosphate), a reaction catalyzed by the N-terminal domain. The sequence is that of Bifunctional protein GlmU from Anaeromyxobacter dehalogenans (strain 2CP-1 / ATCC BAA-258).